A 33-amino-acid chain; its full sequence is GIFDVVKGVLKGVGKNVAGSLLEQLKCKLSGGC.

The cysteines at positions 27 and 33 are disulfide-linked.

As to expression, expressed by the skin glands.

Its subcellular location is the secreted. Functionally, antimicrobial peptide. A mixture of Brevinin-2DYc/2DYd is active against the Gram-positive bacterium S.aureus (MIC=15 uM) and the Gram-negative bacterium E.coli (MIC=15 uM). This Rana dybowskii (Dybovsky's frog) protein is Brevinin-2DYd.